We begin with the raw amino-acid sequence, 130 residues long: Methylglyoxal synthase (130 aa).

The region spanning 1–130 (MMTRPRIALI…AELSRVEAQP (130 aa)) is the MGS-like domain. Substrate is bound by residues histidine 12, lysine 16, 38 to 41 (TGTT), and 58 to 59 (SG). Catalysis depends on aspartate 64, which acts as the Proton donor/acceptor. Residue histidine 91 participates in substrate binding.

Belongs to the methylglyoxal synthase family.

The enzyme catalyses dihydroxyacetone phosphate = methylglyoxal + phosphate. Catalyzes the formation of methylglyoxal from dihydroxyacetone phosphate. The protein is Methylglyoxal synthase of Cupriavidus pinatubonensis (strain JMP 134 / LMG 1197) (Cupriavidus necator (strain JMP 134)).